A 469-amino-acid polypeptide reads, in one-letter code: Glutamate--tRNA ligase (469 aa).

The short motif at 11 to 21 is the 'HIGH' region element; the sequence is PSPTGFIHLGN. A compositionally biased stretch (basic and acidic residues) spans 118 to 131; that stretch reads GEKPRYDGTWRPEP. Residues 118–139 form a disordered region; that stretch reads GEKPRYDGTWRPEPGKVLPEPP. The 'KMSKS' region motif lies at 243–247; the sequence is KMSKR. An ATP-binding site is contributed by K246.

This sequence belongs to the class-I aminoacyl-tRNA synthetase family. Glutamate--tRNA ligase type 1 subfamily. Monomer.

The protein resides in the cytoplasm. The catalysed reaction is tRNA(Glu) + L-glutamate + ATP = L-glutamyl-tRNA(Glu) + AMP + diphosphate. Functionally, catalyzes the attachment of glutamate to tRNA(Glu) in a two-step reaction: glutamate is first activated by ATP to form Glu-AMP and then transferred to the acceptor end of tRNA(Glu). This Burkholderia pseudomallei (strain 1106a) protein is Glutamate--tRNA ligase.